The sequence spans 343 residues: D-alanine--D-alanine ligase (343 aa).

The ATP-grasp domain maps to 129–335; sequence KYVLEHFNIK…YSKLIDELIE (207 aa). Position 162 to 217 (162 to 217) interacts with ATP; the sequence is ENKLGYAVFIKPSNSGSSVGITKAHNRKELEAGLEEAMKYDRKILVEEALNAREIE. Positions 288, 302, and 304 each coordinate Mg(2+).

It belongs to the D-alanine--D-alanine ligase family. Mg(2+) serves as cofactor. It depends on Mn(2+) as a cofactor.

The protein localises to the cytoplasm. The catalysed reaction is 2 D-alanine + ATP = D-alanyl-D-alanine + ADP + phosphate + H(+). It functions in the pathway cell wall biogenesis; peptidoglycan biosynthesis. In terms of biological role, cell wall formation. The chain is D-alanine--D-alanine ligase from Clostridium acetobutylicum (strain ATCC 824 / DSM 792 / JCM 1419 / IAM 19013 / LMG 5710 / NBRC 13948 / NRRL B-527 / VKM B-1787 / 2291 / W).